A 314-amino-acid chain; its full sequence is Olfactory receptor 5P68 (314 aa).

The Extracellular portion of the chain corresponds to 1–28; sequence MAFLHNGNHTAVTEFILLGLTDDPVFRV. A glycan (N-linked (GlcNAc...) asparagine) is linked at Asn-8. Residues 29-49 traverse the membrane as a helical segment; the sequence is ILFTIILCIYLVTVSGNLSTI. Residues 50 to 57 are Cytoplasmic-facing; it reads LLIRVSSQ. The helical transmembrane segment at 58–78 threads the bilayer; it reads LHHPMYFFLSHLASVDIGYSS. Residues 79–102 are Extracellular-facing; that stretch reads SVTPNMLANFLVEKNTISYLGCTI. Cysteines 100 and 192 form a disulfide. Residues 103 to 123 traverse the membrane as a helical segment; sequence QLSLAAFCGTVECFLLATMAY. The Cytoplasmic segment spans residues 124–136; it reads DRFMAICSPLLYS. A helical transmembrane segment spans residues 137–157; sequence TKMSTQVCIQLIVGSYIGGFL. The Extracellular portion of the chain corresponds to 158 to 199; that stretch reads NASSFTLFFLSFLFCGPNRINHFYCDFAPLVALSCSDVSVSE. A helical membrane pass occupies residues 200–220; the sequence is VVTSFFSGSVTMITMLVIAIS. The Cytoplasmic portion of the chain corresponds to 221 to 240; that stretch reads YTYILITILKMRSTEGRHKA. The helical transmembrane segment at 241 to 261 threads the bilayer; sequence FSTCTSHLTAVTLFYGTITFI. Over 262–274 the chain is Extracellular; it reads YVMPKSSFSTDQN. A helical membrane pass occupies residues 275-295; the sequence is KVVSVFYMVVIPMLNPLIYSL. Residues 296-314 are Cytoplasmic-facing; that stretch reads RNNEIKDALKRHLGKKIFS.

The protein belongs to the G-protein coupled receptor 1 family.

It is found in the cell membrane. In terms of biological role, potential odorant receptor. The protein is Olfactory receptor 5P68 of Mus musculus (Mouse).